We begin with the raw amino-acid sequence, 176 residues long: Ribosome maturation factor RimM (176 aa).

Residues 102–175 form the PRC barrel domain; it reads KNDYYWNDII…TDKKFILVQW (74 aa).

The protein belongs to the RimM family. In terms of assembly, binds ribosomal protein uS19.

Its subcellular location is the cytoplasm. Its function is as follows. An accessory protein needed during the final step in the assembly of 30S ribosomal subunit, possibly for assembly of the head region. Essential for efficient processing of 16S rRNA. May be needed both before and after RbfA during the maturation of 16S rRNA. It has affinity for free ribosomal 30S subunits but not for 70S ribosomes. In Buchnera aphidicola subsp. Acyrthosiphon pisum (strain APS) (Acyrthosiphon pisum symbiotic bacterium), this protein is Ribosome maturation factor RimM.